The sequence spans 483 residues: Phloretin 2'-O-glucosyltransferase (483 aa).

H15 (proton acceptor) is an active-site residue. Residue H15 participates in an anthocyanidin binding. Catalysis depends on D118, which acts as the Charge relay. 8 residues coordinate UDP-alpha-D-glucose: T140, A360, Q362, H377, W380, N381, S382, and E385. A400 is a binding site for an anthocyanidin. Residues E401 and Q402 each contribute to the UDP-alpha-D-glucose site.

The protein belongs to the UDP-glycosyltransferase family.

The enzyme catalyses phloretin + UDP-alpha-D-glucose = phlorizin + UDP + H(+). Glycosyltransferase that possesses phloretin 2'-O-glycosyltransferase activity. Converts phloretin to phlorizin (phloretin 2'-O-glucoside), a potent antioxidant. Is specific for phloretin and does not possess glycosyltransferase activity toward caffeic acid, catechin, chlorogenic acid, 2-coumaric acid, 3-coumaric acid, 4-coumaric acid, cyanidin, 3,4-dihydroxyhydrocinnamic acid, epicatechin, 3-hydroxybenzoic acid, naringenin, 3,4-dihydroxybenzoic acid, quercetin and rutin. Can glycosylate phloretin in the presence of UDP-glucose, UDP-xylose and UDP-galactose. This is Phloretin 2'-O-glucosyltransferase from Malus domestica (Apple).